Here is a 315-residue protein sequence, read N- to C-terminus: Ornithine carbamoyltransferase (315 aa).

Residues 57-60 (STRT), Gln84, Arg108, and 135-138 (HPCQ) contribute to the carbamoyl phosphate site. L-ornithine contacts are provided by residues Asn166, Asp230, and 234–235 (SM). Carbamoyl phosphate is bound by residues 270–271 (CL) and Arg298.

The protein belongs to the aspartate/ornithine carbamoyltransferase superfamily. OTCase family.

Its subcellular location is the cytoplasm. The catalysed reaction is carbamoyl phosphate + L-ornithine = L-citrulline + phosphate + H(+). It functions in the pathway amino-acid biosynthesis; L-arginine biosynthesis; L-arginine from L-ornithine and carbamoyl phosphate: step 1/3. Functionally, reversibly catalyzes the transfer of the carbamoyl group from carbamoyl phosphate (CP) to the N(epsilon) atom of ornithine (ORN) to produce L-citrulline. This Thermococcus kodakarensis (strain ATCC BAA-918 / JCM 12380 / KOD1) (Pyrococcus kodakaraensis (strain KOD1)) protein is Ornithine carbamoyltransferase.